The chain runs to 494 residues: MVLLAGTGPEGGGARCMTPPPPSPPRGAQVEEDPADYEEFEDFSSLPDTRSIASDDSFYPFEDEEEHGVESAESVPEGVPESVPETATLLRAACANNVGLLRTLVRRGVSVEEAQETDRNGRTGLIVACYHGFVDTVVALAECPHVDVNWQDSEGNTALITAAQAGHAIITNYLLNYFPGLDLERRNAFGFTALMKAAMQGRTDCIRALMLAGADVHARDPRRGMSPQEWATYTGRVDAVRLMQRLLERPCPEQFWEKYRPELPPPPEAARKPAGSKNCLQRLTDCVLSVLTPRSVRGPEDGGVLDHMVRMTTSLYSPAVAIVCQTVCPESPPSVGKRRLAVQEILAARAARGPQAQEEDEVGGAGQRGRTGQEDADSREGSPRAGLPPALGSRGPAAPAPRKASLLPLQRLRRRSVRPGVVVPRVRVSKAPAPTFQPERPARKGSTKDSGHLQIPKWRYKEAKEEKRKAEEAEKKRQAEAQKERRTAPWKKRT.

Positions 1–80 (MVLLAGTGPE…SAESVPEGVP (80 aa)) are disordered. A compositionally biased stretch (acidic residues) spans 30–42 (VEEDPADYEEFED). ANK repeat units lie at residues 84–113 (PETA…SVEE), 120–150 (NGRT…DVNW), 154–183 (EGNT…GLDL), 189–218 (FGFT…DVHA), and 223–255 (RGMS…PEQF). The tract at residues 349–494 (RAARGPQAQE…RRTAPWKKRT (146 aa)) is disordered. Residues 371 to 382 (TGQEDADSREGS) are compositionally biased toward basic and acidic residues. Ser405 is subject to Phosphoserine. 2 stretches are compositionally biased toward basic and acidic residues: residues 440-451 (RPARKGSTKDSG) and 459-487 (RYKE…ERRT). Positions 459–488 (RYKEAKEEKRKAEEAEKKRQAEAQKERRTA) form a coiled coil.

The protein is Ankyrin repeat domain-containing protein 33B (ANKRD33B) of Homo sapiens (Human).